Reading from the N-terminus, the 387-residue chain is Phosphoglycerate kinase (387 aa).

Residues 21–23 (DLN), Arg36, 59–62 (HLGR), Arg113, and Arg146 each bind substrate. Residues Lys197, Glu314, and 340–343 (GGDT) each bind ATP.

Belongs to the phosphoglycerate kinase family. As to quaternary structure, monomer.

The protein resides in the cytoplasm. It carries out the reaction (2R)-3-phosphoglycerate + ATP = (2R)-3-phospho-glyceroyl phosphate + ADP. The protein operates within carbohydrate degradation; glycolysis; pyruvate from D-glyceraldehyde 3-phosphate: step 2/5. This Pseudomonas aeruginosa (strain ATCC 15692 / DSM 22644 / CIP 104116 / JCM 14847 / LMG 12228 / 1C / PRS 101 / PAO1) protein is Phosphoglycerate kinase.